Reading from the N-terminus, the 513-residue chain is Histidine ammonia-lyase (513 aa).

Residues 143-145 constitute a cross-link (5-imidazolinone (Ala-Gly)); sequence ASG. Residue serine 144 is modified to 2,3-didehydroalanine (Ser).

The protein belongs to the PAL/histidase family. In terms of processing, contains an active site 4-methylidene-imidazol-5-one (MIO), which is formed autocatalytically by cyclization and dehydration of residues Ala-Ser-Gly.

The protein resides in the cytoplasm. It carries out the reaction L-histidine = trans-urocanate + NH4(+). The protein operates within amino-acid degradation; L-histidine degradation into L-glutamate; N-formimidoyl-L-glutamate from L-histidine: step 1/3. The protein is Histidine ammonia-lyase of Xanthomonas axonopodis pv. citri (strain 306).